The primary structure comprises 3587 residues: Tyrocidine synthase 2 (3587 aa).

Residues 466 to 1045 are domain 1 (Proline-activating); the sequence is AATMHELFSR…IQALAAYVEG (580 aa). Carrier domains lie at 972–1047 and 2007–2082; these read APTT…EGGE and APAT…EHSE. O-(pantetheine 4'-phosphoryl)serine occurs at positions 1007 and 2042. Residues 1522-2081 form a domain 2 (Phenylalanine-activating) region; sequence EQTAVVFGDK…RDLARLIEHS (560 aa). The tract at residues 2540–3122 is domain 3 (D-phenylalanine-activating); that stretch reads YRADQTIQQL…NSRESEQGVV (583 aa). The segment at 3017 to 3040 is disordered; the sequence is NDKIDRKALPKPNQEENRTEQYAA. Over residues 3018 to 3035 the composition is skewed to basic and acidic residues; the sequence is DKIDRKALPKPNQEENRT. The region spanning 3040 to 3114 is the Carrier 3 domain; sequence APQTELEQLL…EAALRVIPNS (75 aa). Ser-3075 carries the post-translational modification O-(pantetheine 4'-phosphoryl)serine.

The protein belongs to the ATP-dependent AMP-binding enzyme family. As to quaternary structure, large multienzyme complex of TycA, TycB and TycC. Pantetheine 4'-phosphate is required as a cofactor.

The enzyme catalyses L-phenylalanine + ATP + H2O = D-phenylalanine + AMP + diphosphate + H(+). It functions in the pathway antibiotic biosynthesis; tyrocidine biosynthesis. In terms of biological role, activates the second to fourth amino acids in tyrocidine (in tyrocidine A, Pro, Phe, and D-Phe) and epimerizes the last one. The sequence is that of Tyrocidine synthase 2 (tycB) from Brevibacillus parabrevis.